The chain runs to 237 residues: Ribonuclease PH (237 aa).

Residues arginine 86 and 124–126 (GTR) each bind phosphate.

Belongs to the RNase PH family. In terms of assembly, homohexameric ring arranged as a trimer of dimers.

The catalysed reaction is tRNA(n+1) + phosphate = tRNA(n) + a ribonucleoside 5'-diphosphate. In terms of biological role, phosphorolytic 3'-5' exoribonuclease that plays an important role in tRNA 3'-end maturation. Removes nucleotide residues following the 3'-CCA terminus of tRNAs; can also add nucleotides to the ends of RNA molecules by using nucleoside diphosphates as substrates, but this may not be physiologically important. Probably plays a role in initiation of 16S rRNA degradation (leading to ribosome degradation) during starvation. This chain is Ribonuclease PH, found in Beijerinckia indica subsp. indica (strain ATCC 9039 / DSM 1715 / NCIMB 8712).